Consider the following 91-residue polypeptide: Large ribosomal subunit protein bL28 (91 aa).

It belongs to the bacterial ribosomal protein bL28 family.

The chain is Large ribosomal subunit protein bL28 from Protochlamydia amoebophila (strain UWE25).